The chain runs to 826 residues: Ribonucleases P/MRP protein subunit POP1 (826 aa).

Disordered regions lie at residues 1–24 and 49–91; these read MATT…PRKI and NKDF…SGGD. The Nuclear localization signal signature appears at 58–65; that stretch reads KRRRTNSY. The span at 70-79 shows a compositional bias: basic residues; sequence AKKRNIKRQK.

In terms of assembly, component of nuclear RNase P and RNase MRP ribonucleoproteins. RNase P consists of a catalytic RNA moiety and different protein chains. Several subunits of RNase P are also part of the RNase MRP complex. RNase MRP consists of a catalytic RNA moiety and several protein subunits.

The protein resides in the nucleus. It localises to the nucleolus. Its function is as follows. Component of ribonuclease P, a ribonucleoprotein complex that generates mature tRNA molecules by cleaving their 5'-ends. Also a component of the MRP ribonuclease complex, which cleaves pre-rRNA sequences. Required for rRNA maturation, including 5.8S rRNA processing. This chain is Ribonucleases P/MRP protein subunit POP1, found in Arabidopsis thaliana (Mouse-ear cress).